The sequence spans 143 residues: Large ribosomal subunit protein uL11 (143 aa).

This sequence belongs to the universal ribosomal protein uL11 family. Part of the ribosomal stalk of the 50S ribosomal subunit. Interacts with L10 and the large rRNA to form the base of the stalk. L10 forms an elongated spine to which L12 dimers bind in a sequential fashion forming a multimeric L10(L12)X complex. Post-translationally, one or more lysine residues are methylated.

Its function is as follows. Forms part of the ribosomal stalk which helps the ribosome interact with GTP-bound translation factors. This is Large ribosomal subunit protein uL11 from Ralstonia nicotianae (strain ATCC BAA-1114 / GMI1000) (Ralstonia solanacearum).